The sequence spans 317 residues: Beta-sarcoglycan (317 aa).

A disordered region spans residues Met-1 to Val-31. Residues Met-1 to Ala-64 are Cytoplasmic-facing. Residues Ser-20–Val-31 are compositionally biased toward basic and acidic residues. Residues Ile-65–Ile-85 form a helical; Signal-anchor for type II membrane protein membrane-spanning segment. Topologically, residues Trp-86–Tyr-317 are extracellular. N-linked (GlcNAc...) asparagine glycosylation is found at Asn-157, Asn-210, and Asn-257. Intrachain disulfides connect Cys-287-Cys-313 and Cys-289-Cys-306.

Belongs to the sarcoglycan beta/delta/gamma/zeta family. Cross-link to form 2 major subcomplexes: one consisting of SGCB, SGCD and SGCG and the other consisting of SGCB and SGCD. The association between SGCB and SGCG is particularly strong while SGCA is loosely associated with the other sarcoglycans. Disulfide bonds are present.

Its subcellular location is the cell membrane. The protein resides in the sarcolemma. The protein localises to the cytoplasm. It is found in the cytoskeleton. In terms of biological role, component of the sarcoglycan complex, a subcomplex of the dystrophin-glycoprotein complex which forms a link between the F-actin cytoskeleton and the extracellular matrix. This is Beta-sarcoglycan (SGCB) from Bos taurus (Bovine).